The sequence spans 782 residues: Ribosome biogenesis protein ERB1 (782 aa).

Disordered regions lie at residues 1 to 123 (MGSK…RIEK) and 339 to 361 (PEEY…EDRE). The segment covering 35–86 (SEDEEDYLPSDDDDDVEDSENEGTGASEDDDDDDDDDDILSDDIPSDVDSEE) has biased composition (acidic residues). Over residues 105-123 (VDPKREEDDGADRNYRIEK) the composition is skewed to basic and acidic residues. 7 WD repeats span residues 433 to 472 (GHEG…QVWS), 476 to 516 (NSEE…VTPA), 567 to 609 (TVRS…TQIP), 612 to 650 (KLSG…LVKV), 653 to 692 (PGAK…RPYK), 696 to 736 (FHGQ…DQLE), and 752 to 782 (VSKL…RLWM).

It belongs to the WD repeat BOP1/ERB1 family. Component of the NOP7 complex, composed of ERB1, NOP7 and YTM1. The complex is held together by ERB1, which interacts with NOP7 via its N-terminal domain and with YTM1 via a high-affinity interaction between the seven-bladed beta-propeller domains of the 2 proteins. The NOP7 complex associates with the 66S pre-ribosome.

The protein resides in the nucleus. The protein localises to the nucleolus. Its subcellular location is the nucleoplasm. Component of the NOP7 complex, which is required for maturation of the 25S and 5.8S ribosomal RNAs and formation of the 60S ribosome. The polypeptide is Ribosome biogenesis protein ERB1 (Chaetomium globosum (strain ATCC 6205 / CBS 148.51 / DSM 1962 / NBRC 6347 / NRRL 1970) (Soil fungus)).